We begin with the raw amino-acid sequence, 274 residues long: Rhamnulose-1-phosphate aldolase (274 aa).

E117 is a catalytic residue. Positions 141, 143, and 212 each coordinate Zn(2+).

It belongs to the aldolase class II family. RhaD subfamily. As to quaternary structure, homotetramer. Zn(2+) is required as a cofactor.

Its subcellular location is the cytoplasm. The enzyme catalyses L-rhamnulose 1-phosphate = (S)-lactaldehyde + dihydroxyacetone phosphate. It participates in carbohydrate degradation; L-rhamnose degradation; glycerone phosphate from L-rhamnose: step 3/3. Functionally, catalyzes the reversible cleavage of L-rhamnulose-1-phosphate to dihydroxyacetone phosphate (DHAP) and L-lactaldehyde. This Shigella boydii serotype 4 (strain Sb227) protein is Rhamnulose-1-phosphate aldolase.